Reading from the N-terminus, the 492-residue chain is uncharacterized protein (492 aa).

The protein belongs to the FGGY kinase family.

This is an uncharacterized protein from Archaeoglobus fulgidus (strain ATCC 49558 / DSM 4304 / JCM 9628 / NBRC 100126 / VC-16).